Consider the following 211-residue polypeptide: Transcriptional regulatory protein LiaR (211 aa).

In terms of domain architecture, Response regulatory spans 3-119; the sequence is RVLLIDDHEM…EIADAIRAAS (117 aa). Aspartate 54 carries the post-translational modification 4-aspartylphosphate. In terms of domain architecture, HTH luxR-type spans 143–208; sequence NALPHESLTK…QAAVYAHRNH (66 aa). The H-T-H motif DNA-binding region spans 167–186; that stretch reads NKEIGEELFITIKTVKTHIT.

Phosphorylated by LiaS.

The protein resides in the cytoplasm. Its function is as follows. Member of the two-component regulatory system LiaS/LiaR probably involved in response to a subset of cell wall-active antibiotics that interfere with the lipid II cycle in the cytoplasmic membrane (bacitracin, nisin, ramoplanin and vancomycin). Also seems to be involved in response to cationic antimicrobial peptides and secretion stress. LiaR regulates the transcription of the liaIHGFSR operon. In Bacillus subtilis (strain 168), this protein is Transcriptional regulatory protein LiaR (liaR).